We begin with the raw amino-acid sequence, 806 residues long: Ribonucleoside-diphosphate reductase large subunit (806 aa).

Positions 1–91 (MYVLNRKGEE…TDNLHKNTSD (91 aa)) constitute an ATP-cone domain. Residues 5 to 6 (NR), 11 to 17 (EDISFDQ), threonine 52, and aspartate 56 contribute to the ATP site. Residue serine 215 coordinates GDP. Cysteine 216 and cysteine 442 are disulfide-bonded. DTTP is bound by residues 224–226 (DSI), lysine 241, arginine 254, and 261–262 (RG). Asparagine 425 contributes to the GDP binding site. The Proton acceptor role is filled by asparagine 425. Cysteine 427 serves as the catalytic Cysteine radical intermediate. GDP-binding positions include glutamate 429 and 604–607 (TAST). Glutamate 429 acts as the Proton acceptor in catalysis.

The protein belongs to the ribonucleoside diphosphate reductase large chain family. Heterodimer of a large and a small subunit.

The enzyme catalyses a 2'-deoxyribonucleoside 5'-diphosphate + [thioredoxin]-disulfide + H2O = a ribonucleoside 5'-diphosphate + [thioredoxin]-dithiol. With respect to regulation, under complex allosteric control mediated by deoxynucleoside triphosphates and ATP binding to separate specificity and activation sites on the large subunit. The type of nucleotide bound at the specificity site determines substrate preference. It seems probable that ATP makes the enzyme reduce CDP and UDP, dGTP favors ADP reduction and dTTP favors GDP reduction. Stimulated by ATP and inhibited by dATP binding to the activity site. In terms of biological role, provides the precursors necessary for DNA synthesis. Catalyzes the biosynthesis of deoxyribonucleotides from the corresponding ribonucleotides. The sequence is that of Ribonucleoside-diphosphate reductase large subunit (RNR1) from Plasmodium falciparum (isolate Dd2).